A 133-amino-acid polypeptide reads, in one-letter code: Ribosome-binding factor A (133 aa).

This sequence belongs to the RbfA family. In terms of assembly, monomer. Binds 30S ribosomal subunits, but not 50S ribosomal subunits or 70S ribosomes.

The protein resides in the cytoplasm. Functionally, one of several proteins that assist in the late maturation steps of the functional core of the 30S ribosomal subunit. Associates with free 30S ribosomal subunits (but not with 30S subunits that are part of 70S ribosomes or polysomes). Required for efficient processing of 16S rRNA. May interact with the 5'-terminal helix region of 16S rRNA. The chain is Ribosome-binding factor A from Alteromonas mediterranea (strain DSM 17117 / CIP 110805 / LMG 28347 / Deep ecotype).